Here is a 230-residue protein sequence, read N- to C-terminus: Sugar fermentation stimulation protein homolog (230 aa).

This sequence belongs to the SfsA family.

The polypeptide is Sugar fermentation stimulation protein homolog (Clostridium botulinum (strain 657 / Type Ba4)).